Here is a 146-residue protein sequence, read N- to C-terminus: Hut operon positive regulatory protein (146 aa).

It belongs to the HutP family. In terms of assembly, homohexamer.

Antiterminator that binds to cis-acting regulatory sequences on the mRNA in the presence of histidine, thereby suppressing transcription termination and activating the hut operon for histidine utilization. In Bacillus cereus (strain ZK / E33L), this protein is Hut operon positive regulatory protein.